The chain runs to 657 residues: DNA ligase (657 aa).

Position 80 to 81 (80 to 81) interacts with NAD(+); that stretch reads SL. The N6-AMP-lysine intermediate role is filled by lysine 104. Positions 125, 159, and 297 each coordinate NAD(+). Zn(2+)-binding residues include cysteine 386, cysteine 389, cysteine 406, and cysteine 411. In terms of domain architecture, BRCT spans 571-657; the sequence is QSEQIFENLN…EWLNNGVRPE (87 aa).

It belongs to the NAD-dependent DNA ligase family. LigA subfamily. The cofactor is Mg(2+). Mn(2+) is required as a cofactor.

It carries out the reaction NAD(+) + (deoxyribonucleotide)n-3'-hydroxyl + 5'-phospho-(deoxyribonucleotide)m = (deoxyribonucleotide)n+m + AMP + beta-nicotinamide D-nucleotide.. Its function is as follows. DNA ligase that catalyzes the formation of phosphodiester linkages between 5'-phosphoryl and 3'-hydroxyl groups in double-stranded DNA using NAD as a coenzyme and as the energy source for the reaction. It is essential for DNA replication and repair of damaged DNA. This Ruminiclostridium cellulolyticum (strain ATCC 35319 / DSM 5812 / JCM 6584 / H10) (Clostridium cellulolyticum) protein is DNA ligase.